Reading from the N-terminus, the 298-residue chain is Acetylglutamate kinase (298 aa).

Residues 69-70 (GG), R91, and N196 each bind substrate.

It belongs to the acetylglutamate kinase family. ArgB subfamily.

It localises to the cytoplasm. It catalyses the reaction N-acetyl-L-glutamate + ATP = N-acetyl-L-glutamyl 5-phosphate + ADP. The protein operates within amino-acid biosynthesis; L-arginine biosynthesis; N(2)-acetyl-L-ornithine from L-glutamate: step 2/4. Its function is as follows. Catalyzes the ATP-dependent phosphorylation of N-acetyl-L-glutamate. The protein is Acetylglutamate kinase of Rhodopseudomonas palustris (strain BisB5).